A 776-amino-acid polypeptide reads, in one-letter code: Ecdysone receptor (776 aa).

Residues 1–290 (MYRLNIVSTN…GPTPRQQEEL (290 aa)) form a modulating region. Positions 199–283 (NEEWISSPSP…DAKKQKKGPT (85 aa)) are disordered. Over residues 204–213 (SSPSPGSVPG) the composition is skewed to low complexity. Composition is skewed to polar residues over residues 227-245 (TTYT…STGS) and 261-270 (SPSSSLNGYT). A DNA-binding region (nuclear receptor) is located at residues 288–363 (EELCLVCGDR…VGMRPECVVP (76 aa)). 2 consecutive NR C4-type zinc fingers follow at residues 291 to 311 (CLVC…CEGC) and 327 to 346 (CKFG…CQEC). The region spanning 437–673 (NQMAVIYKLI…FLEEIWDVQD (237 aa)) is the NR LBD domain. Residues 679-688 (QAQMHSHGTQ) are compositionally biased toward polar residues. Residues 679–776 (QAQMHSHGTQ…VPGLGMLDQV (98 aa)) form a disordered region. Residues 689 to 745 (SSSSSSSSSSSSSNGSSNGNSSSNSNSSQHGPHPHPHGQQLTPNQQQHQQQHSQLQQ) are compositionally biased toward low complexity.

This sequence belongs to the nuclear hormone receptor family. NR1 subfamily. In terms of assembly, heterodimer of USP and ECR. Only the heterodimer is capable of high-affinity binding to ecdysone. As to expression, a peak level expression is seen in the fat body of previtellogenic female mosquitos at one and two days after eclosion, levels fall three-fold at three days posteclosion.

The protein localises to the nucleus. Functionally, receptor for ecdysone. Binds to ecdysone response elements (ECRES). The sequence is that of Ecdysone receptor (EcR) from Aedes aegypti (Yellowfever mosquito).